Consider the following 61-residue polypeptide: Tryptophyllin-T1 (61 aa).

Positions 1–22 are cleaved as a signal peptide; that stretch reads MDFLKKSLFLVLFLGLVSISLC. A propeptide spanning residues 23–53 is cleaved from the precursor; the sequence is DEEKRQDDDEASEREEKKEIHEEGNQEERRD. The tract at residues 25 to 61 is disordered; sequence EKRQDDDEASEREEKKEIHEEGNQEERRDRPPSWIPK. A compositionally biased stretch (basic and acidic residues) spans 36–55; sequence REEKKEIHEEGNQEERRDRP. Residue Pro56 is modified to 4-hydroxyproline; partial.

This sequence belongs to the frog skin active peptide (FSAP) family. Tryptophillin subfamily. As to expression, expressed by the skin glands.

It localises to the secreted. The polypeptide is Tryptophyllin-T1 (Pithecopus azureus (Orange-legged monkey tree frog)).